We begin with the raw amino-acid sequence, 286 residues long: Fructose-bisphosphate aldolase (286 aa).

S50 is a D-glyceraldehyde 3-phosphate binding site. D85 serves as the catalytic Proton donor. H86, D107, E137, and H181 together coordinate Zn(2+). G182 is a dihydroxyacetone phosphate binding site. H209 contacts Zn(2+). Residues 210–212 (GGT) and 231–234 (NVNT) contribute to the dihydroxyacetone phosphate site.

It belongs to the class II fructose-bisphosphate aldolase family. Zn(2+) is required as a cofactor.

It catalyses the reaction beta-D-fructose 1,6-bisphosphate = D-glyceraldehyde 3-phosphate + dihydroxyacetone phosphate. It participates in carbohydrate degradation; glycolysis; D-glyceraldehyde 3-phosphate and glycerone phosphate from D-glucose: step 4/4. Functionally, catalyzes the aldol condensation of dihydroxyacetone phosphate (DHAP or glycerone-phosphate) with glyceraldehyde 3-phosphate (G3P) to form fructose 1,6-bisphosphate (FBP) in gluconeogenesis and the reverse reaction in glycolysis. This is Fructose-bisphosphate aldolase (fba) from Staphylococcus aureus (strain MSSA476).